A 324-amino-acid polypeptide reads, in one-letter code: Fructose-1,6-bisphosphatase class 1 (324 aa).

Mg(2+) is bound by residues Glu-88, Asp-107, Leu-109, and Asp-110. Residues Asp-110–Ser-113, Asn-199, and Lys-265 contribute to the substrate site. Glu-271 lines the Mg(2+) pocket.

It belongs to the FBPase class 1 family. As to quaternary structure, homotetramer. Requires Mg(2+) as cofactor.

It is found in the cytoplasm. It carries out the reaction beta-D-fructose 1,6-bisphosphate + H2O = beta-D-fructose 6-phosphate + phosphate. The protein operates within carbohydrate biosynthesis; gluconeogenesis. This is Fructose-1,6-bisphosphatase class 1 from Neisseria meningitidis serogroup B (strain ATCC BAA-335 / MC58).